The sequence spans 360 residues: Thiol protease SEN102 (360 aa).

An N-terminal signal peptide occupies residues 1–20 (MAKPKFIALALVALSFLSIA). A propeptide spans 21–133 (QSIPFTEKDL…ENVGSLPAAS (113 aa)) (activation peptide). 3 cysteine pairs are disulfide-bonded: Cys151-Cys193, Cys185-Cys225, and Cys283-Cys335. Cys154 is an active-site residue. Active-site residues include His289 and Asn310. Asn353 is a glycosylation site (N-linked (GlcNAc...) asparagine). A Prevents secretion from ER motif is present at residues 357 to 360 (RDEL).

The protein belongs to the peptidase C1 family.

The protein resides in the endoplasmic reticulum lumen. The sequence is that of Thiol protease SEN102 (SEN102) from Hemerocallis sp. (Daylily).